We begin with the raw amino-acid sequence, 219 residues long: HTH-type transcriptional activator FasR (219 aa).

The disordered stretch occupies residues 1 to 30; that stretch reads MSDLANTAERRGEKRPAGGNRRGNRLPRDE. One can recognise an HTH tetR-type domain in the interval 29–89; it reads DERRGQLLIA…AVLQRHVDNL (61 aa). Positions 52–71 form a DNA-binding region, H-T-H motif; it reads GMDEIADRAGVSKPVLYQHF.

In terms of assembly, homodimer.

Its activity is regulated as follows. FasR:DNA binding is regulated by long-chain acyl-CoAs (C14- to C26-CoA), which act as effector molecules that modulate the affinity of FasR for its DNA binding sequences and therefore modulate the expression of the essential fas-acpS operon. Transcriptional activator that plays a central role in sensing mycobacterial long-chain fatty acids and regulating lipid biosynthesis. Activates the expression of the genes encoding the fatty acid synthase (fas) and the 4-phosphopantetheinyl transferase (acpS), whose products are involved in the fatty acid and mycolic acid biosynthesis. Specifically binds to three conserved operator sequences present in the fas-acpS promoter region. Essential for M.smegmatis viability. The protein is HTH-type transcriptional activator FasR of Mycolicibacterium smegmatis (strain ATCC 700084 / mc(2)155) (Mycobacterium smegmatis).